Reading from the N-terminus, the 205-residue chain is MELNGLRVSRETQARLQHFAALFQKWAKTINLVAPSTLDDLWHRHIADSSQIFQICPEPIRWADLGSGGGFPGVITAIFLAELQDGWAHLVESNHKKAAFLMTALRETEARGSVHAIRIEDAPAEIGECGAISARALADLDGLIGYAAPWMLGKENCRGFFHKGRDYLREIDEARGRWEFDLVEHKSAVEQESVILEISNLRRLV.

Residues G66, F71, 119 to 120 (IE), and R135 each bind S-adenosyl-L-methionine.

Belongs to the methyltransferase superfamily. RNA methyltransferase RsmG family.

The protein resides in the cytoplasm. The enzyme catalyses guanosine(527) in 16S rRNA + S-adenosyl-L-methionine = N(7)-methylguanosine(527) in 16S rRNA + S-adenosyl-L-homocysteine. In terms of biological role, specifically methylates the N7 position of guanine in position 527 of 16S rRNA. The protein is Ribosomal RNA small subunit methyltransferase G of Rhizobium etli (strain CIAT 652).